The sequence spans 363 residues: Aminomethyltransferase (363 aa).

This sequence belongs to the GcvT family. The glycine cleavage system is composed of four proteins: P, T, L and H.

The enzyme catalyses N(6)-[(R)-S(8)-aminomethyldihydrolipoyl]-L-lysyl-[protein] + (6S)-5,6,7,8-tetrahydrofolate = N(6)-[(R)-dihydrolipoyl]-L-lysyl-[protein] + (6R)-5,10-methylene-5,6,7,8-tetrahydrofolate + NH4(+). Its function is as follows. The glycine cleavage system catalyzes the degradation of glycine. This Thermotoga neapolitana (strain ATCC 49049 / DSM 4359 / NBRC 107923 / NS-E) protein is Aminomethyltransferase.